We begin with the raw amino-acid sequence, 122 residues long: Large ribosomal subunit protein uL14 (122 aa).

Belongs to the universal ribosomal protein uL14 family. In terms of assembly, part of the 50S ribosomal subunit. Forms a cluster with proteins L3 and L19. In the 70S ribosome, L14 and L19 interact and together make contacts with the 16S rRNA in bridges B5 and B8.

In terms of biological role, binds to 23S rRNA. Forms part of two intersubunit bridges in the 70S ribosome. The protein is Large ribosomal subunit protein uL14 of Cupriavidus taiwanensis (strain DSM 17343 / BCRC 17206 / CCUG 44338 / CIP 107171 / LMG 19424 / R1) (Ralstonia taiwanensis (strain LMG 19424)).